The sequence spans 2904 residues: Highly reducing polyketide synthase bet1 (2904 aa).

The 434-residue stretch at 8-441 (NEPIAIVGSG…GTNAHAIVES (434 aa)) folds into the Ketosynthase family 3 (KS3) domain. Active-site for beta-ketoacyl synthase activity residues include C181, H320, and H361. The tract at residues 553 to 875 (VFTGQGAQYA…PYHGTLLRGG (323 aa)) is acyl transferase (AT) domain. The interval 948 to 1081 (HQLLGDVSPD…GELKVVLVDE (134 aa)) is N-terminal hotdog fold. The 310-residue stretch at 948 to 1257 (HQLLGDVSPD…FKPVGSDASN (310 aa)) folds into the PKS/mFAS DH domain. Residues 971–1255 (PREMTWLEGH…VKFKPVGSDA (285 aa)) form a dehydratase (DH) domain region. The active-site Proton acceptor; for dehydratase activity is H980. Residues 1098–1257 (MIPVQPSRLY…FKPVGSDASN (160 aa)) form a C-terminal hotdog fold region. The active-site Proton donor; for dehydratase activity is the D1159. The interval 1411 to 1596 (KQSTLWVASI…GFSGIDTMSP (186 aa)) is methyltransferase (cMeT) domain. The ketoreductase (KR)domain stretch occupies residues 2125–2298 (TYWLVGLSGA…RSSVVNVGAI (174 aa)). One can recognise a Carrier domain in the interval 2407–2486 (EVANVIKQAY…SLVELAAESI (80 aa)). Residue S2445 is modified to O-(pantetheine 4'-phosphoryl)serine. Residues 2492–2543 (PGVPQANANPNGPSSPDSDATESSNQNSDVDVTSTRATSPSTPAATSPDSNV) are disordered. Polar residues predominate over residues 2497–2523 (ANANPNGPSSPDSDATESSNQNSDVDV). Residues 2524-2541 (TSTRATSPSTPAATSPDS) are compositionally biased toward low complexity. The reductase (R) domain stretch occupies residues 2585–2817 (LTGCSGLLGH…DLVSVETCCE (233 aa)).

The cofactor is pantetheine 4'-phosphate.

The catalysed reaction is 7 malonyl-CoA + acetyl-CoA + 10 AH2 + 5 S-adenosyl-L-methionine + 2 H(+) = dehydroprobetaenone I + 10 A + 5 S-adenosyl-L-homocysteine + 7 CO2 + 8 CoA + 6 H2O. It functions in the pathway mycotoxin biosynthesis. Its function is as follows. Highly reducing polyketide synthase; part of the gene cluster that mediates the biosynthesis of betaenones, phytotoxic polyketides involved in leaf spot disease in sugar beets. The first step of the pathway is the synthesis of dehydroprobetaenone I by the polyketide synthase bet1 and the enoyl reductase bet3 via condensation of one acetyl-CoA starter unit with 7 malonyl-CoA units and 5 methylations. The C-terminal reductase (R) domain of bet1 catalyzes the reductive release of the polyketide chain. Because bet1 lacks a designated enoylreductase (ER) domain, the required activity is provided the enoyl reductase bet3. The short-chain dehydrogenase/reductase bet4 then catalyzes reduction of dehydroprobetaenone I to probetaenone I. The cytochrome P450 monooxygenase bet2 catalyzes successive epoxidation, oxidation (resulting from epoxide opening) and hydroxylation to install a tertiary alcohol in the decaline ring to yield betaenone C from dehydroprobetaenone I and betaenone B from probetaenone I. The FAD-linked oxidoreductase (orf1) is probably responsible for the conversion of betaenone C to betaenone A via an intramolecular aldol reaction between C-1 and C-17 to form the bridged tricyclic system in betaenone A. In Neocamarosporium betae (Beet black rot fungus), this protein is Highly reducing polyketide synthase bet1.